The following is a 400-amino-acid chain: Large envelope protein (400 aa).

The N-myristoyl glycine; by host moiety is linked to residue Gly2. Positions 2 to 119 (GGWLPKPRKG…PPLRDSHPQA (118 aa)) are pre-S1. The segment at 2–174 (GGWLPKPRKG…SSRTGDPAPT (173 aa)) is pre-S. Over 2-181 (GGWLPKPRKG…APTMENITSG (180 aa)) the chain is Virion surface; in external conformation. Topologically, residues 2 to 253 (GGWLPKPRKG…PGYRWMCLRR (252 aa)) are intravirion; in internal conformation. A disordered region spans residues 84–115 (TLTTVPAVPPPASANRQSGRQPTPISPPLRDS). The segment covering 97–106 (ANRQSGRQPT) has biased composition (polar residues). Residues 120 to 174 (IKWNSPAFHQALQDPRVKGLYFPAGGSSSGTVSPVPNIASHISSISSRTGDPAPT) form a pre-S2 region. Residues 182 to 202 (FLGPLLVLQAGFFLLTRILTI) form a helical membrane-spanning segment. Topologically, residues 203-253 (PQSLDSWWTSLNFLGGSPVCLGQNSQSPTSNHSPTSCPPICPGYRWMCLRR) are intravirion; in external conformation. Residues 254–274 (FIIFLFILLLCLIFLLVLLDY) traverse the membrane as a helical segment. The Virion surface segment spans residues 275 to 348 (QGMLPVCPLI…WASVRFSWLS (74 aa)). A glycan (N-linked (GlcNAc...) asparagine; by host) is linked at Asn320. The helical transmembrane segment at 349–369 (LLVPFVQWFVGLSPTVWLSVI) threads the bilayer. Residues 370-375 (WMMWYW) lie on the Intravirion side of the membrane. A helical membrane pass occupies residues 376–398 (GPRLYNILSPFIPLLPIFFCLWV). Topologically, residues 399–400 (YI) are virion surface.

This sequence belongs to the orthohepadnavirus major surface antigen family. As to quaternary structure, li-HBsAg interacts with capsid protein and with HDV Large delta antigen. Isoform M associates with host chaperone CANX through its pre-S2 N glycan. This association may be essential for M proper secretion. In terms of processing, isoform M is N-terminally acetylated by host at a ratio of 90%, and N-glycosylated by host at the pre-S2 region. Myristoylated.

It is found in the virion membrane. In terms of biological role, the large envelope protein exists in two topological conformations, one which is termed 'external' or Le-HBsAg and the other 'internal' or Li-HBsAg. In its external conformation the protein attaches the virus to cell receptors and thereby initiating infection. This interaction determines the species specificity and liver tropism. This attachment induces virion internalization predominantly through caveolin-mediated endocytosis. The large envelope protein also assures fusion between virion membrane and endosomal membrane. In its internal conformation the protein plays a role in virion morphogenesis and mediates the contact with the nucleocapsid like a matrix protein. Functionally, the middle envelope protein plays an important role in the budding of the virion. It is involved in the induction of budding in a nucleocapsid independent way. In this process the majority of envelope proteins bud to form subviral lipoprotein particles of 22 nm of diameter that do not contain a nucleocapsid. The sequence is that of Large envelope protein from Hepatitis B virus genotype A3 (isolate Cameroon/CMR983/1994) (HBV-A).